The primary structure comprises 319 residues: tRNA(Ile)-lysidine synthase (319 aa).

32–37 is an ATP binding site; that stretch reads SGGSDS.

This sequence belongs to the tRNA(Ile)-lysidine synthase family.

The protein resides in the cytoplasm. The enzyme catalyses cytidine(34) in tRNA(Ile2) + L-lysine + ATP = lysidine(34) in tRNA(Ile2) + AMP + diphosphate + H(+). Functionally, ligates lysine onto the cytidine present at position 34 of the AUA codon-specific tRNA(Ile) that contains the anticodon CAU, in an ATP-dependent manner. Cytidine is converted to lysidine, thus changing the amino acid specificity of the tRNA from methionine to isoleucine. This Chlamydia pneumoniae (Chlamydophila pneumoniae) protein is tRNA(Ile)-lysidine synthase.